The chain runs to 157 residues: MGVFNFEDETTSIVAPARLYKALVTDSDNLIPKVIDAIQSIEIVEGNGGAGTIKKLTFVEGGETKYDLHKVDLVDDVNFAYNYSIVGGGGLPDTVEKISFESKLSAGPDGGSIAKLTVKYFTKGDAAPSEEEIKGGKARGDGLFKALEGYVLANPDY.

The protein belongs to the BetVI family. In terms of tissue distribution, expressed in roots. Detected in nodules and leaves, but not in stems and flowers.

In Medicago truncatula (Barrel medic), this protein is Class-10 pathogenesis-related protein 1 (PR10-1).